Reading from the N-terminus, the 432-residue chain is MHVVVLGSGVVGVASAWYLRQAGHEVTVIDREPGPALETSAANAGQISPGYAAPWAAPGVPLKAIKWMFQRHAPLAISLDGTHFQLKWMWQMLRNCDTRHYMQNKGRMVRLAEYSRDCLKALRESTGIQYEGRQGGTLQLFRTEQQYENASRDIAVLESEGVPFRLLKAAELAQVEPALADVAHKLTGGLQLPNDETGDCQLFTTRLAQMAEAAGVVFRYNTPVDRLLSEGQRIYGVKCGDEVIKADGYVMAFGSYSTAMLKGIVDIPVYPLKGYSLTIPIADESGAPVSTVLDETYKIAITRFDNRIRVGGMAEIVGFNTELLKPRQETLEMVVRDLYPRGGHIEQAKFWTGLRPMTPDGTPVVGRTEFKNLWLNTGHGTLGWTMACGSGQLLSDIISGRTPAIPFEDLSVARYAPGFTPSSSHRLHGAHP.

3–17 is a binding site for FAD; the sequence is VVVLGSGVVGVASAW.

The protein belongs to the DadA oxidoreductase family. FAD serves as cofactor.

It catalyses the reaction a D-alpha-amino acid + A + H2O = a 2-oxocarboxylate + AH2 + NH4(+). It participates in amino-acid degradation; D-alanine degradation; NH(3) and pyruvate from D-alanine: step 1/1. Its function is as follows. Oxidative deamination of D-amino acids. The chain is D-amino acid dehydrogenase from Cronobacter sakazakii (strain ATCC BAA-894) (Enterobacter sakazakii).